A 231-amino-acid chain; its full sequence is Ribose-5-phosphate isomerase A (231 aa).

Substrate contacts are provided by residues 28 to 31 (TGST), 83 to 86 (DGAD), and 96 to 99 (KGGG). Glu105 serves as the catalytic Proton acceptor. Lys123 contributes to the substrate binding site.

It belongs to the ribose 5-phosphate isomerase family. Homodimer.

It carries out the reaction aldehydo-D-ribose 5-phosphate = D-ribulose 5-phosphate. It participates in carbohydrate degradation; pentose phosphate pathway; D-ribose 5-phosphate from D-ribulose 5-phosphate (non-oxidative stage): step 1/1. Catalyzes the reversible conversion of ribose-5-phosphate to ribulose 5-phosphate. This Rhizobium meliloti (strain 1021) (Ensifer meliloti) protein is Ribose-5-phosphate isomerase A.